Here is a 305-residue protein sequence, read N- to C-terminus: MYNGILPVYKERGLTSHDVVFKLRKILKTKKIGHTGTLDPEVAGVLPVCIGNATRVSDYVMDMGKAYEANVSIGRSTTTEDQTGDTLEMKGVHSADFNNDDIDRLLENFKGVIEQIPPMYSSVKVNGKKLYEYARNNETVERPKRKVNIKDIGRISELDFKENECHFKIRVICGKGTYIRTLATDIGVKLGFPAHMSKLTRIESGGFVLKDSLTLEQIKELHEQDSLQNKLFPLEYGLKGLPSIKIKDSHIKKRILNGQKFNKNEFDNKIKDQIVFIDDDSEKVLAIYMVHPTKESEIKPKKVFN.

Asp39 functions as the Nucleophile in the catalytic mechanism.

The protein belongs to the pseudouridine synthase TruB family. Type 1 subfamily.

It carries out the reaction uridine(55) in tRNA = pseudouridine(55) in tRNA. Responsible for synthesis of pseudouridine from uracil-55 in the psi GC loop of transfer RNAs. The sequence is that of tRNA pseudouridine synthase B from Staphylococcus aureus (strain bovine RF122 / ET3-1).